Consider the following 275-residue polypeptide: Erythroagglutinating phytohemagglutinin (275 aa).

The N-terminal stretch at 1-21 (MASSNLLSLALFLVLLTHANS) is a signal peptide. A glycan (N-linked (GlcNAc...) (high mannose) asparagine) is linked at asparagine 33. 2 N-linked (GlcNAc...) asparagine glycosylation sites follow: asparagine 81 and asparagine 101.

It belongs to the leguminous lectin family.

In terms of biological role, this insecticidal carbohydrate-binding lectin is toxic for the cowpea weevil. The chain is Erythroagglutinating phytohemagglutinin (DLEC1) from Phaseolus vulgaris (Kidney bean).